Consider the following 975-residue polypeptide: Protein spalten (975 aa).

2 disordered regions span residues methionine 1–glutamine 31 and asparagine 64–asparagine 99. The span at asparagine 8–serine 17 shows a compositional bias: basic and acidic residues. Positions serine 21 to threonine 70 form a coiled coil. The region spanning phenylalanine 114–proline 458 is the G-alpha domain. The interval threonine 117–threonine 130 is G1 motif. GTP is bound by residues glycine 122 to threonine 129, isoleucine 261 to lysine 267, glycine 286 to lysine 290, and asparagine 373 to aspartate 376. Residues aspartate 259 to lysine 267 are G2 motif. The tract at residues valine 282 to glutamine 291 is G3 motif. The interval tyrosine 369–aspartate 376 is G4 motif. The segment at valine 427–lysine 432 is G5 motif. 2 disordered regions span residues phenylalanine 455–threonine 520 and aspartate 541–lysine 700. Low complexity-rich tracts occupy residues asparagine 460–serine 478, leucine 500–threonine 515, and serine 544–threonine 587. The segment covering proline 595–glycine 688 has biased composition (basic and acidic residues). The PPM-type phosphatase domain maps to glutamate 704–leucine 972. 4 residues coordinate Mn(2+): aspartate 749, glycine 750, aspartate 920, and aspartate 963.

The protein in the N-terminal section; belongs to the G-alpha family. In the C-terminal section; belongs to the PP2C family. In terms of assembly, g proteins are composed of 3 units; alpha, beta and gamma. The alpha chain contains the guanine nucleotide binding site. It depends on Mg(2+) as a cofactor. Mn(2+) is required as a cofactor.

Its subcellular location is the cytoplasm. It localises to the cytosol. The protein localises to the cell membrane. It carries out the reaction O-phospho-L-seryl-[protein] + H2O = L-seryl-[protein] + phosphate. The catalysed reaction is O-phospho-L-threonyl-[protein] + H2O = L-threonyl-[protein] + phosphate. With respect to regulation, inhibited by 50 mM NaF (sodium fluoride). Involved in cell-type differentiation and morphogenesis. Dephosphorylates casein; in vitro. May also be involved as modulators or transducers in various transmembrane signaling systems. This is Protein spalten (spnA) from Dictyostelium discoideum (Social amoeba).